The primary structure comprises 250 residues: Probable replication-associated protein repA2 (250 aa).

The protein belongs to the IncFII RepA family.

This protein is essential for plasmid replication; it is involved in copy control functions. In Buchnera aphidicola subsp. Acyrthosiphon pisum (strain APS) (Acyrthosiphon pisum symbiotic bacterium), this protein is Probable replication-associated protein repA2 (repA2).